A 303-amino-acid polypeptide reads, in one-letter code: Sulfate adenylyltransferase subunit 2 (303 aa).

Residues 282 to 303 (SGRLIDHDESGSMEKKKREGYF) are disordered.

This sequence belongs to the PAPS reductase family. CysD subfamily. In terms of assembly, heterodimer composed of CysD, the smaller subunit, and CysN.

It carries out the reaction sulfate + ATP + H(+) = adenosine 5'-phosphosulfate + diphosphate. It participates in sulfur metabolism; hydrogen sulfide biosynthesis; sulfite from sulfate: step 1/3. Functionally, with CysN forms the ATP sulfurylase (ATPS) that catalyzes the adenylation of sulfate producing adenosine 5'-phosphosulfate (APS) and diphosphate, the first enzymatic step in sulfur assimilation pathway. APS synthesis involves the formation of a high-energy phosphoric-sulfuric acid anhydride bond driven by GTP hydrolysis by CysN coupled to ATP hydrolysis by CysD. The protein is Sulfate adenylyltransferase subunit 2 of Maricaulis maris (strain MCS10) (Caulobacter maris).